Reading from the N-terminus, the 711-residue chain is Zinc finger CCCH domain-containing protein 43 (711 aa).

The tract at residues 1–49 (MPQDDDWFWGRPTPVVVGDGETTSKPKPPVAGKTKKVEEQHPRRPGEPD) is disordered. Positions 35 to 47 (KKVEEQHPRRPGE) are enriched in basic and acidic residues. 3 consecutive C3H1-type zinc fingers follow at residues 44–72 (RPGE…HPDP), 90–118 (RPGE…HPPR), and 157–185 (RPGT…HPDP). The 254-residue stretch at 384-637 (LKTLKSILNT…GAISYLIEKE (254 aa)) folds into the MIF4G domain.

This Oryza sativa subsp. japonica (Rice) protein is Zinc finger CCCH domain-containing protein 43.